The primary structure comprises 791 residues: Protein CLASP-2 (791 aa).

Low complexity-rich tracts occupy residues 259–271 (ASDA…SVNS), 323–334 (RTPNTRPMTTRT), and 372–381 (SQPGSRNGSP). Disordered stretches follow at residues 259 to 283 (ASDA…SKLS), 315 to 391 (TRMT…TGTL), and 422 to 454 (AMNT…PQKS). A compositionally biased stretch (polar residues) spans 422–434 (AMNTAKESLGQPS).

The protein belongs to the CLASP family. As to quaternary structure, interacts with hcp-1 and hcp-2.

The protein localises to the cytoplasm. It localises to the cytoskeleton. It is found in the microtubule organizing center. Its subcellular location is the centrosome. The protein resides in the chromosome. The protein localises to the centromere. It localises to the kinetochore. It is found in the spindle. Probable microtubule plus-end tracking protein that promotes the stabilization of dynamic microtubules. Required for the formation of mitotic and meiotic spindles. Specifically promotes the polymerization of kinetochore-bound microtubules. Also required for cytoplasmic streaming. The protein is Protein CLASP-2 (cls-2) of Caenorhabditis briggsae.